Reading from the N-terminus, the 87-residue chain is Small ribosomal subunit protein uS12m (87 aa).

Belongs to the universal ribosomal protein uS12 family.

It localises to the mitochondrion matrix. Its subcellular location is the kinetoplast. Protein S12 is involved in the translation initiation step. The protein is Small ribosomal subunit protein uS12m (RPS12) of Trypanoplasma borreli.